The following is a 156-amino-acid chain: Endoribonuclease YbeY (156 aa).

3 residues coordinate Zn(2+): histidine 122, histidine 126, and histidine 132.

Belongs to the endoribonuclease YbeY family. Zn(2+) is required as a cofactor.

The protein resides in the cytoplasm. Functionally, single strand-specific metallo-endoribonuclease involved in late-stage 70S ribosome quality control and in maturation of the 3' terminus of the 16S rRNA. This chain is Endoribonuclease YbeY, found in Geobacillus kaustophilus (strain HTA426).